The following is a 241-amino-acid chain: Core protein D3 homolog (241 aa).

This sequence belongs to the chordopoxvirinae D3 family.

The protein localises to the virion. In terms of biological role, late protein which is part of a large complex required for early virion morphogenesis. This complex participates in the formation of virosomes and the incorporation of virosomal contents into nascent immature virions. This Oryctolagus cuniculus (Rabbit) protein is Core protein D3 homolog.